A 501-amino-acid chain; its full sequence is GTPase Obg (501 aa).

Positions 2-159 (NRFIDRVVLH…HDLILELKSM (158 aa)) constitute an Obg domain. Positions 160–341 (ADVGLVGFPS…LKYKLLEIVQ (182 aa)) constitute an OBG-type G domain. Residues 166 to 173 (GFPSAGKS), 191 to 195 (FTTLQ), 212 to 215 (DVPG), 292 to 295 (NKAD), and 322 to 324 (SAV) contribute to the GTP site. Residues Ser173 and Thr193 each coordinate Mg(2+). An OCT domain is found at 362–442 (VDHRTKGQFQ…IGGISFEWEP (81 aa)).

The protein belongs to the TRAFAC class OBG-HflX-like GTPase superfamily. OBG GTPase family. In terms of assembly, monomer. Requires Mg(2+) as cofactor.

It is found in the cytoplasm. Functionally, an essential GTPase which binds GTP, GDP and possibly (p)ppGpp with moderate affinity, with high nucleotide exchange rates and a fairly low GTP hydrolysis rate. Plays a role in control of the cell cycle, stress response, ribosome biogenesis and in those bacteria that undergo differentiation, in morphogenesis control. This is GTPase Obg from Corynebacterium glutamicum (strain R).